The chain runs to 87 residues: Small ribosomal subunit protein uS17 (87 aa).

It belongs to the universal ribosomal protein uS17 family. In terms of assembly, part of the 30S ribosomal subunit.

In terms of biological role, one of the primary rRNA binding proteins, it binds specifically to the 5'-end of 16S ribosomal RNA. The polypeptide is Small ribosomal subunit protein uS17 (Endomicrobium trichonymphae).